A 248-amino-acid polypeptide reads, in one-letter code: Probable transcriptional regulatory protein OCAR_7305/OCA5_c08120 (248 aa).

It belongs to the TACO1 family.

Its subcellular location is the cytoplasm. The chain is Probable transcriptional regulatory protein OCAR_7305/OCA5_c08120 from Afipia carboxidovorans (strain ATCC 49405 / DSM 1227 / KCTC 32145 / OM5) (Oligotropha carboxidovorans).